Consider the following 55-residue polypeptide: Large ribosomal subunit protein bL33 (55 aa).

Positions 1–11 (MAKGSREKIKL) are enriched in basic and acidic residues. The disordered stretch occupies residues 1-32 (MAKGSREKIKLESSASTGHFYTTSKNKRTKPE). Residues 13 to 24 (SSASTGHFYTTS) show a composition bias toward polar residues.

Belongs to the bacterial ribosomal protein bL33 family.

The protein is Large ribosomal subunit protein bL33 of Polynucleobacter necessarius subsp. necessarius (strain STIR1).